Consider the following 218-residue polypeptide: 1-Cys peroxiredoxin PER1 (218 aa).

The Thioredoxin domain occupies 4–164 (LTIGDTVPNL…VVRAVDSLLT (161 aa)). C46 serves as the catalytic Cysteine sulfenic acid (-SOH) intermediate. The short motif at 194–217 (KKMFPQGFETADLPSKKGYLRFTK) is the Bipartite nuclear localization signal element.

The protein belongs to the peroxiredoxin family. Prx6 subfamily.

Its subcellular location is the nucleus. The protein resides in the cytoplasm. The enzyme catalyses a hydroperoxide + [thioredoxin]-dithiol = an alcohol + [thioredoxin]-disulfide + H2O. Thiol-specific peroxidase that catalyzes the reduction of hydrogen peroxide and organic hydroperoxides to water and alcohols, respectively. Seems to contribute to the inhibition of germination during stress. This is 1-Cys peroxiredoxin PER1 (PER1) from Triticum aestivum (Wheat).